Here is a 791-residue protein sequence, read N- to C-terminus: MSRRRHSDENDGGQAHKRRKTSEPLEIEDRLESLICRVGEKSTSSLESNLEGLAGVLEADLPNYKSKILRILCFVARLLPEKMSVYSTLVGLLNARNYNFGGEFVEAMIRHLKETIKLNAYSEAVYLVRFLSDLVNCHVIAAPSMVAMFESFVGVTQEEDIPQVRSDWYVYAVLSSLPWVGKELYEKKDVEMDRILSQIEAYLKQRQKLHVSILQVWSAEKPHPQEEYLDCLWAQIQKLKKDRWQERHILRPYLAFDSVLCEALQHNLPPFTPPPHTEDSVYPVPRVVFRMFDYTDAPEGPVMPGSHSVERFVIEENLHCILKSHWRERKTCAAQLLSYPEKNKIPLNYHIVEVIFGELFQLPTPPHIDVMYTTLLIELCKLQPGSLPQVLAQASEMLYTRLDTMNTICIDRFINWFSHHLSNFQFRWNWEDWADCLSQDLNKPKPQFVREVLEKCMRLSYHQRILDIVPATFSALYPASPSCVFKYGDESNSALPGYSVAVTLTNEIKNKASDKEIFNILKDIPNPNQDDDDDEGISFNPLKIEVFVQSLLNLASKSFSHAFSALAKFHDIFKALSESDEGKLHILRVAYDVWKNHPQMIAVLVDKMIRTQIVDCAAVANWIFSPELSHDFTRFYIWEILHSTIRKMNKHVQKIQKELEETKQRLAKQHKHRDSDDNDEDSGRKDGPLEEQIERLQEKVESAQSEQKNLFLVIFQRFIMILTEHLVRCETGAIDVNTAWYKNCRERLQQIFLQHHQTIQQYMVTLENLLFTAELDHHILTVFQQFCALQS.

The segment at 1–24 (MSRRRHSDENDGGQAHKRRKTSEP) is disordered. An MIF4G domain is found at 28–240 (EDRLESLICR…CLWAQIQKLK (213 aa)). Residues 641–714 (LHSTIRKMNK…SEQKNLFLVI (74 aa)) are a coiled coil. The segment at 664 to 687 (QRLAKQHKHRDSDDNDEDSGRKDG) is disordered.

The protein belongs to the NCBP1 family. As to quaternary structure, component of the nuclear cap-binding complex (CBC), a heterodimer composed of ncbp1/cbp80 and ncbp2/cbp20 that interacts with m7GpppG-capped RNA. Component of an alternative nuclear cap-binding complex (CBC) composed of ncbp1/cbp80 and ncbp3.

It is found in the nucleus. The protein localises to the cytoplasm. In terms of biological role, component of the cap-binding complex (CBC), which binds cotranscriptionally to the 5'-cap of pre-mRNAs and is involved in various processes such as pre-mRNA splicing, translation regulation, nonsense-mediated mRNA decay, RNA-mediated gene silencing (RNAi) by microRNAs (miRNAs) and mRNA export. The CBC complex is involved in mRNA export from the nucleus, leading to the recruitment of the mRNA export machinery to the 5'-end of mRNA and to mRNA export in a 5' to 3' direction through the nuclear pore. The CBC complex is also involved in mediating U snRNA and intronless mRNAs export from the nucleus. The CBC complex is essential for a pioneer round of mRNA translation, before steady state translation when the CBC complex is replaced by cytoplasmic cap-binding protein eIF4E. The pioneer round of mRNA translation mediated by the CBC complex plays a central role in nonsense-mediated mRNA decay (NMD), NMD only taking place in mRNAs bound to the CBC complex, but not on eIF4E-bound mRNAs. The CBC complex enhances NMD in mRNAs containing at least one exon-junction complex (EJC), promoting the interaction between UPF1 and UPF2. The CBC complex is also involved in 'failsafe' NMD, which is independent of the EJC complex, while it does not participate in Staufen-mediated mRNA decay (SMD). During cell proliferation, the CBC complex is also involved in microRNAs (miRNAs) biogenesis via its interaction with SRRT/ARS2 and is required for miRNA-mediated RNA interference. The CBC complex also acts as a negative regulator of parn, thereby acting as an inhibitor of mRNA deadenylation. In the CBC complex, NCBP1/CBP80 does not bind directly capped RNAs (m7GpppG-capped RNA) but is required to stabilize the movement of the N-terminal loop of NCBP2/CBP20 and lock the CBC into a high affinity cap-binding state with the cap structure. Associates with NCBP3 to form an alternative cap-binding complex (CBC) which plays a key role in mRNA export. The conventional CBC with NCBP2 binds both small nuclear RNA (snRNA) and messenger (mRNA) and is involved in their export from the nucleus whereas the alternative CBC with NCBP3 does not bind snRNA and associates only with mRNA thereby playing a role only in mRNA export. This is Nuclear cap-binding protein subunit 1-A (ncbp1-a) from Xenopus laevis (African clawed frog).